Consider the following 101-residue polypeptide: Small ribosomal subunit protein uS14 (101 aa).

It belongs to the universal ribosomal protein uS14 family. In terms of assembly, part of the 30S ribosomal subunit. Contacts proteins S3 and S10.

Functionally, binds 16S rRNA, required for the assembly of 30S particles and may also be responsible for determining the conformation of the 16S rRNA at the A site. In Methylorubrum populi (strain ATCC BAA-705 / NCIMB 13946 / BJ001) (Methylobacterium populi), this protein is Small ribosomal subunit protein uS14.